A 385-amino-acid polypeptide reads, in one-letter code: Protein hunchback (385 aa).

2 disordered regions span residues 1–94 (IGGI…YDAM) and 124–216 (ESRA…PGLR). The segment covering 63–77 (SASPSSSSKDSNGHS) has biased composition (low complexity). 2 stretches are compositionally biased toward basic and acidic residues: residues 126 to 135 (RASDARDHSP) and 173 to 203 (PERRSFDRFHDSGFDGVDHNKHDGDDGREGS). C2H2-type zinc fingers lie at residues 229 to 251 (FKCKQCEFVAVTKLSFWEHSKEH), 258 to 280 (LCCRKCPFVTEYKHHLEYHMRNH), 286 to 308 (FQCSQCSYSCVNKSMLNSHLKSH), and 314 to 338 (YRCADCNYATKYCDSLKLHLRKYQH). Residues 361-385 (TRRGPKQKPLSKIFEQQTGTNNHSP) form a disordered region. The span at 374 to 385 (FEQQTGTNNHSP) shows a compositional bias: polar residues.

Belongs to the hunchback C2H2-type zinc-finger protein family.

It is found in the nucleus. Gap class segmentation protein that controls development of head structures. The sequence is that of Protein hunchback (hb) from Bombyx mori (Silk moth).